The sequence spans 430 residues: Histidine--tRNA ligase (430 aa).

It belongs to the class-II aminoacyl-tRNA synthetase family. In terms of assembly, homodimer.

It is found in the cytoplasm. The catalysed reaction is tRNA(His) + L-histidine + ATP = L-histidyl-tRNA(His) + AMP + diphosphate + H(+). This is Histidine--tRNA ligase from Lactococcus lactis subsp. lactis (strain IL1403) (Streptococcus lactis).